The primary structure comprises 323 residues: ATP synthase gamma chain (323 aa).

It belongs to the ATPase gamma chain family. F-type ATPases have 2 components, CF(1) - the catalytic core - and CF(0) - the membrane proton channel. CF(1) has five subunits: alpha(3), beta(3), gamma(1), delta(1), epsilon(1). CF(0) has three main subunits: a, b and c.

Its subcellular location is the cell inner membrane. In terms of biological role, produces ATP from ADP in the presence of a proton gradient across the membrane. The gamma chain is believed to be important in regulating ATPase activity and the flow of protons through the CF(0) complex. This is ATP synthase gamma chain from Rickettsia rickettsii (strain Iowa).